We begin with the raw amino-acid sequence, 69 residues long: MNSANPCCDPITCKPKKGEHCVSGPCCRNCKFLNPGTICKKGRGDNLNDYCTGVSSDCPRNPWKSEEED.

Residues Met-1 to Glu-66 form the Disintegrin domain. Disulfide bonds link Cys-7-Cys-30, Cys-21-Cys-27, Cys-26-Cys-51, and Cys-39-Cys-58. The Cell attachment site motif lies at Arg-43–Asp-45.

This sequence belongs to the disintegrin family. Dimeric disintegrin subfamily. As to quaternary structure, heterodimer with EMF10B; disulfide-linked. In terms of tissue distribution, expressed by the venom gland.

It is found in the secreted. In terms of biological role, extremely potent and selective inhibitor of integrin alpha-5/beta-1 (ITGA5/ITGB1). Partially inhibits adhesion of cells expressing alpha-IIb/beta-3 (ITGA2B/ITGB3), alpha-V/beta-3 (ITGAV/ITGB3), and alpha-4/beta-1 (ITGA4/ITGB1) to appropriate ligands only at concentration higher than 500 nM. Weakly inhibits ADP-induced platelet aggregation. The protein is Disintegrin EMF10A of Eristicophis macmahoni (Leaf-nosed viper).